The following is a 130-amino-acid chain: Small ribosomal subunit protein uS9 (130 aa).

It belongs to the universal ribosomal protein uS9 family.

In Shewanella sediminis (strain HAW-EB3), this protein is Small ribosomal subunit protein uS9.